Consider the following 198-residue polypeptide: Undecaprenyl phosphate transporter A (198 aa).

The next 5 helical transmembrane spans lie at 15-35 (MGYA…EIVL), 47-67 (IGFI…QIFI), 107-127 (VVFS…PAGI), 135-155 (FVVL…YLGI), and 169-189 (GTYT…YFVI).

The protein belongs to the DedA family.

Its subcellular location is the cell membrane. Flippase that catalyzes the transport of undecaprenyl phosphate (UndP) across the cytoplasmic membrane, from the external side to the cytoplasmic side. Is involved in UndP recycling during peptidoglycan synthesis. This Bacillus subtilis (strain 168) protein is Undecaprenyl phosphate transporter A.